A 490-amino-acid polypeptide reads, in one-letter code: Interferon-induced protein with tetratricopeptide repeats 3 (490 aa).

TPR repeat units follow at residues 51 to 84, 94 to 127, 136 to 169, 172 to 206, 207 to 240, 241 to 274, 415 to 448, and 450 to 481; these read ATMY…IQQE, LVTW…CKKF, SELD…KPNN, FSSG…SPDN, QYVK…SPCQ, TDVL…TPNN, PNYW…LLRD, and PSGI…SPRE. Phosphoserine is present on residues Ser203 and Ser237. The interval 467–490 is disordered; it reads SEEMGQGAVSSSPRELLSNSEQLN. Residues 474–490 show a composition bias toward polar residues; sequence AVSSSPRELLSNSEQLN. At Ser478 the chain carries Phosphoserine.

It belongs to the IFIT family. In terms of assembly, component of an interferon-dependent multiprotein complex, at least composed of IFIT1, IFIT2 and IFIT3. Interacts with IFIT1 and IFIT2. Interacts (via N-terminus) with MAVS, TBK1, TRAF6 and RIGI. Interacts with COPS5. As to expression, expression significantly higher in peripheral blood mononuclear cells (PBMCs) and monocytes from systemic lupus erythematosus (SLE) patients than in those from healthy individuals (at protein level). Spleen, lung, leukocytes, lymph nodes, placenta, bone marrow and fetal liver.

The protein localises to the cytoplasm. It localises to the mitochondrion. Its function is as follows. IFN-induced antiviral protein which acts as an inhibitor of cellular as well as viral processes, cell migration, proliferation, signaling, and viral replication. Enhances MAVS-mediated host antiviral responses by serving as an adapter bridging TBK1 to MAVS which leads to the activation of TBK1 and phosphorylation of IRF3 and phosphorylated IRF3 translocates into nucleus to promote antiviral gene transcription. Exhibits an antiproliferative activity via the up-regulation of cell cycle negative regulators CDKN1A/p21 and CDKN1B/p27. Normally, CDKN1B/p27 turnover is regulated by COPS5, which binds CDKN1B/p27 in the nucleus and exports it to the cytoplasm for ubiquitin-dependent degradation. IFIT3 sequesters COPS5 in the cytoplasm, thereby increasing nuclear CDKN1B/p27 protein levels. Up-regulates CDKN1A/p21 by down-regulating MYC, a repressor of CDKN1A/p21. Can negatively regulate the apoptotic effects of IFIT2. The chain is Interferon-induced protein with tetratricopeptide repeats 3 (IFIT3) from Homo sapiens (Human).